The chain runs to 269 residues: Shikimate dehydrogenase (NADP(+)) (269 aa).

Shikimate contacts are provided by residues 17–19 (SKS) and Thr-64. The active-site Proton acceptor is Lys-68. Glu-80 provides a ligand contact to NADP(+). Shikimate contacts are provided by Asn-89 and Asp-105. NADP(+) contacts are provided by residues 130–134 (GAGGA), 154–159 (NRTHAK), and Met-213. Residue Tyr-215 participates in shikimate binding. Residue Gly-237 participates in NADP(+) binding.

It belongs to the shikimate dehydrogenase family. In terms of assembly, homodimer.

It carries out the reaction shikimate + NADP(+) = 3-dehydroshikimate + NADPH + H(+). Its pathway is metabolic intermediate biosynthesis; chorismate biosynthesis; chorismate from D-erythrose 4-phosphate and phosphoenolpyruvate: step 4/7. In terms of biological role, involved in the biosynthesis of the chorismate, which leads to the biosynthesis of aromatic amino acids. Catalyzes the reversible NADPH linked reduction of 3-dehydroshikimate (DHSA) to yield shikimate (SA). The protein is Shikimate dehydrogenase (NADP(+)) of Neisseria cinerea.